We begin with the raw amino-acid sequence, 132 residues long: Small ribosomal subunit protein uS8 (132 aa).

This sequence belongs to the universal ribosomal protein uS8 family. As to quaternary structure, part of the 30S ribosomal subunit. Contacts proteins S5 and S12.

Functionally, one of the primary rRNA binding proteins, it binds directly to 16S rRNA central domain where it helps coordinate assembly of the platform of the 30S subunit. The sequence is that of Small ribosomal subunit protein uS8 from Mesorhizobium japonicum (strain LMG 29417 / CECT 9101 / MAFF 303099) (Mesorhizobium loti (strain MAFF 303099)).